The sequence spans 121 residues: uncharacterized protein (121 aa).

Disordered regions lie at residues 38-76 (NQMA…KYQQ) and 91-121 (SVLR…KQEN). The span at 43–63 (KRNKQSKKPKQTSKGVKKSSK) shows a compositional bias: basic residues. Residues 64-76 (QNKNSSKNNKYQQ) are compositionally biased toward low complexity.

This is an uncharacterized protein from Schizosaccharomyces pombe (strain 972 / ATCC 24843) (Fission yeast).